Consider the following 80-residue polypeptide: Acyl carrier protein (80 aa).

One can recognise a Carrier domain in the interval 1 to 79; that stretch reads MTEEEIFNKI…EAVEYIKSHQ (79 aa). Ser39 carries the post-translational modification O-(pantetheine 4'-phosphoryl)serine.

The protein belongs to the acyl carrier protein (ACP) family. Post-translationally, 4'-phosphopantetheine is transferred from CoA to a specific serine of apo-ACP by AcpS. This modification is essential for activity because fatty acids are bound in thioester linkage to the sulfhydryl of the prosthetic group.

It is found in the cytoplasm. Its pathway is lipid metabolism; fatty acid biosynthesis. Carrier of the growing fatty acid chain in fatty acid biosynthesis. The chain is Acyl carrier protein from Lactobacillus johnsonii (strain CNCM I-12250 / La1 / NCC 533).